The sequence spans 396 residues: 12-oxophytodienoate reductase 3 (396 aa).

FMN-binding positions include Pro31 to Thr33, Gly64, and Gln106. His185–His188 serves as a coordination point for substrate. The Proton donor role is filled by Tyr190. Arg237 is an FMN binding site. A substrate-binding site is contributed by Arg283. FMN contacts are provided by residues Gly321 and Gly342–Arg343. Residues Gly342–Arg343 are FMN. The Microbody targeting signal signature appears at Ser394–Leu396.

This sequence belongs to the NADH:flavin oxidoreductase/NADH oxidase family. It depends on FMN as a cofactor. Expressed in roots and to a lower extent in leaves and flowers.

It is found in the peroxisome. The enzyme catalyses (1S,2S)-OPC-8 + NADP(+) = (9S,13S,15Z)-12-oxophyto-10,15-dienoate + NADPH + H(+). Its pathway is lipid metabolism; oxylipin biosynthesis. Functionally, specifically cleaves olefinic bonds in cyclic enones. Involved in the biosynthesis of jasmonic acid (JA) and perhaps in biosynthesis or metabolism of other oxylipin signaling moleclules. It is required for the spatial and temporal regulation of JA levels during dehiscence of anthers, promoting the stomium degeneration program. In vitro, reduces 9S,13S-12-oxophytodienoic acid (9S,13S-OPDA) and 9R,13R-OPDA to 9S,13S-OPC-8:0 and 9R,13R-OPC-8:0, respectively. In Solanum lycopersicum (Tomato), this protein is 12-oxophytodienoate reductase 3 (OPR3).